Reading from the N-terminus, the 553-residue chain is Transmembrane protein DDB_G0292058 (553 aa).

A signal peptide spans 1–26 (MIKINKILSLLIILLIINCNYQFVKA). 2 consecutive transmembrane segments (helical) span residues 80 to 100 (ILLS…GIIF) and 137 to 157 (VFIL…VFIT). Asparagine 162, asparagine 171, asparagine 178, and asparagine 195 each carry an N-linked (GlcNAc...) asparagine glycan. The next 2 helical transmembrane spans lie at 243-263 (IIIV…VSAL) and 274-294 (SIAL…HYPI). Residues asparagine 315, asparagine 332, asparagine 351, asparagine 396, asparagine 405, and asparagine 462 are each glycosylated (N-linked (GlcNAc...) asparagine). The chain crosses the membrane as a helical span at residues 515 to 535 (LLIAPTAVFAILLTGLGITGI).

It localises to the membrane. In Dictyostelium discoideum (Social amoeba), this protein is Transmembrane protein DDB_G0292058.